The sequence spans 246 residues: 33kDa venom protein (246 aa).

Positions 1 to 20 (MAGKEVIFIMALFIAVESSP) are cleaved as a signal peptide. 7 consecutive repeat copies span residues 83–96 (GGAVSESVKQKRET), 97–110 (AESLSGSFDKEKAS), 111–124 (AENLSGSFDQQKSS), 125–138 (VDEKSGSVGQQKGA), 139–152 (VEGQSGSGEQRRET), 153–166 (AESQSGSVDQEKAS), and 167–180 (AENLSGSIDKQKVT). A 12 X approximate tandem repeats of [AV][DE]X[VL]SGSX[DE]QX[KR]X[ST] region spans residues 83-243 (GGAVSESVKQ…SGSVGNDDDI (161 aa)). Residues 88–246 (ESVKQKRETA…VGNDDDISVQ (159 aa)) are disordered. A compositionally biased stretch (polar residues) spans 112–123 (ENLSGSFDQQKS). Residues 175–186 (DKQKVTVEEKSE) are compositionally biased toward basic and acidic residues. The stretch at 181 to 187 (VEEKSEP) is one 8; half-length repeat. 4 repeat units span residues 188-201 (AQGQSGSVKQKRKT), 202-215 (TENVSGSLDQEKAS), 216-229 (AESLSGSFDQQKSS), and 230-243 (VDEKSGSVGNDDDI). Polar residues predominate over residues 217 to 228 (ESLSGSFDQQKS).

Expressed by the venom gland.

It is found in the secreted. The protein is 33kDa venom protein of Chelonus sp. nr. curvimaculatus (Parasitic wasp).